The following is a 469-amino-acid chain: Mitochondrial adenyl nucleotide antiporter SLC25A25 (469 aa).

A regulatory N-terminal domain region spans residues 1-165 (MLCLCLYVPV…LYWKHSTIFD (165 aa)). The Mitochondrial intermembrane portion of the chain corresponds to 1–189 (MLCLCLYVPV…ERQTGMWWRH (189 aa)). EF-hand domains are found at residues 47–80 (TYRQ…QDHE), 78–113 (DHEK…LGVK), and 114–149 (ISEQ…HPVE). Residues D60, D62, D64, Q66, and E71 each contribute to the Ca(2+) site. The segment at 151 to 160 (IPEIILYWKH) is linker region. Residues 166 to 469 (VGENLTVPDE…LKITLGVQSR (304 aa)) form a C-terminal transmembrane transporter domain region. Solcar repeat units lie at residues 184–270 (GMWW…IKRL), 278–363 (LRIH…LKNA), and 375–463 (PGVF…LKIT). Residues 190–207 (LVAGGGAGAVSRTCTAPL) form a helical membrane-spanning segment. The Mitochondrial matrix portion of the chain corresponds to 208-244 (DRLKVLMQVHASRSNNMGIVGGFTQMIREGGARSLWR). A helical transmembrane segment spans residues 245 to 264 (GNGINVLKIAPESAIKFMAY). The Mitochondrial intermembrane portion of the chain corresponds to 265 to 287 (EQIKRLVGSDQETLRIHERLVAG). The helical transmembrane segment at 288-301 (SLAGAIAQSSIYPM) threads the bilayer. The Mitochondrial matrix segment spans residues 302-337 (EVLKTRMALRKTGQYSGMLDCARRILAREGVAAFYK). Residues 338–357 (GYVPNMLGIIPYAGIDLAVY) traverse the membrane as a helical segment. Residues 358–380 (ETLKNAWLQHYAVNSADPGVFVL) are Mitochondrial intermembrane-facing. A helical membrane pass occupies residues 381-398 (LACGTMSSTCGQLASYPL). The Mitochondrial matrix segment spans residues 399–437 (ALVRTRMQAQASIEGAPEVTMSSLFKHILRTEGAFGLYR). A helical membrane pass occupies residues 438–457 (GLAPNFMKVIPAVSISYVVY). The Mitochondrial intermembrane segment spans residues 458-469 (ENLKITLGVQSR).

This sequence belongs to the mitochondrial carrier (TC 2.A.29) family. In terms of tissue distribution, widely expressed. Expressed in fetal and adult liver, skeletal muscle, testis, ovary, hippocampus and caudate nucleus. As to expression, expressed in all tissues tested. Expression is restricted to kidney and lung.

It localises to the mitochondrion inner membrane. The enzyme catalyses Mg(2+)(out) + phosphate(in) + ATP(out) = Mg(2+)(in) + phosphate(out) + ATP(in). Its activity is regulated as follows. Activated by an increase in cytosolic calcium levels that induce a conformational change of the N-terminal regulatory domain, uncapping the channel and allowing transport. Electroneutral antiporter that most probably mediates the transport of adenyl nucleotides through the inner mitochondrial membrane. Originally identified as an ATP-magnesium/inorganic phosphate antiporter, it could have a broader specificity for adenyl nucleotides. By regulating the mitochondrial matrix adenyl nucleotide pool could adapt to changing cellular energetic demands and indirectly regulate adenyl nucleotide-dependent metabolic pathways. The chain is Mitochondrial adenyl nucleotide antiporter SLC25A25 from Homo sapiens (Human).